Reading from the N-terminus, the 838-residue chain is V-type proton ATPase 116 kDa subunit a 1 (838 aa).

Topologically, residues 1–388 are cytoplasmic; the sequence is MGELFRSEEM…DAYGIGTYRE (388 aa). Phosphothreonine occurs at positions 250 and 360. Tyr-364 is modified (phosphotyrosine). Residues 389-407 form a helical membrane-spanning segment; that stretch reads INPAPYTIITFPFLFAVMF. Residues 408 to 409 are Vacuolar-facing; it reads GD. The helical transmembrane segment at 410–426 threads the bilayer; that stretch reads LGHGILMTLFAVWMVLK. The Cytoplasmic segment spans residues 427–441; sequence ESRILSQKNENEMFS. A helical transmembrane segment spans residues 442–471; it reads TIFSGRYIILLMGVFSIYTGLIYNDCFSKS. Over 472–535 the chain is Vacuolar; the sequence is LNIFGSSWSV…ATNKLTFLNS (64 aa). Residues 536-555 traverse the membrane as a helical segment; that stretch reads FKMKMSVILGIIHMLFGVSL. The Cytoplasmic segment spans residues 556–573; sequence SLFNHTYFKKPLNIYFGF. Residues 574–594 form a helical membrane-spanning segment; that stretch reads IPEIIFMTSLFGYLVILIFYK. Residues 595 to 639 lie on the Vacuolar side of the membrane; it reads WTAYNAKTSEKAPSLLIHFINMFLFSYGDSGNSMLYSGQKGIQCF. Residues 640–659 traverse the membrane as a helical segment; the sequence is LVVVALLCVPWMLLFKPLVL. Residues 660–725 lie on the Cytoplasmic side of the membrane; sequence RRQYLRRKHL…DTMVHQAIHT (66 aa). The chain crosses the membrane as a helical span at residues 726–750; the sequence is IEYCLGCISNTASYLRLWALSLAHA. The Vacuolar segment spans residues 751-771; the sequence is QLSEVLWTMVIHIGLKVKSLA. Residues 772–810 traverse the membrane as a helical segment; the sequence is GGLALFFIFAAFATLTVAILLIMEGLSAFLHALRLHWVE. The Cytoplasmic portion of the chain corresponds to 811–838; sequence FQNKFYSGTGFKFLPFSFEHIREGKFDD.

Belongs to the V-ATPase 116 kDa subunit family. As to quaternary structure, V-ATPase is a heteromultimeric enzyme made up of two complexes: the ATP-hydrolytic V1 complex and the proton translocation V0 complex. The V1 complex consists of three catalytic AB heterodimers that form a heterohexamer, three peripheral stalks each consisting of EG heterodimers, one central rotor including subunits D and F, and the regulatory subunits C and H. The proton translocation complex V0 consists of the proton transport subunit a, a ring of proteolipid subunits c9c'', rotary subunit d, subunits e and f, and the accessory subunits ATP6AP1/Ac45 and ATP6AP2/PRR. Interacts with SPAAR. In terms of tissue distribution, expressed in brain (at protein level). As to expression, expressed heart, kidney, liver, spleen, and to a lesser extent in brain.

Its subcellular location is the cytoplasmic vesicle. The protein localises to the clathrin-coated vesicle membrane. The protein resides in the secretory vesicle. It is found in the synaptic vesicle membrane. It localises to the melanosome. Functionally, subunit of the V0 complex of vacuolar(H+)-ATPase (V-ATPase), a multisubunit enzyme composed of a peripheral complex (V1) that hydrolyzes ATP and a membrane integral complex (V0) that translocates protons. V-ATPase is responsible for the acidification of various organelles, such as lysosomes, endosomes, the trans-Golgi network, and secretory granules, including synaptic vesicles. In certain cell types, can be exported to the plasma membrane, where it is involved in the acidification of the extracellular environment. Required for assembly and activity of the vacuolar ATPase. Through its action on compartment acidification, plays an essential role in neuronal development in terms of integrity and connectivity of neurons. This is V-type proton ATPase 116 kDa subunit a 1 (ATP6V0A1) from Bos taurus (Bovine).